A 189-amino-acid polypeptide reads, in one-letter code: dCTP deaminase (189 aa).

Residues 112–117, 136–138, Gln-157, Tyr-171, and Gln-181 each bind dCTP; these read KSTYAR and TLE. Glu-138 (proton donor/acceptor) is an active-site residue.

The protein belongs to the dCTP deaminase family. Homotrimer.

The enzyme catalyses dCTP + H2O + H(+) = dUTP + NH4(+). It participates in pyrimidine metabolism; dUMP biosynthesis; dUMP from dCTP (dUTP route): step 1/2. Catalyzes the deamination of dCTP to dUTP. This is dCTP deaminase from Teredinibacter turnerae (strain ATCC 39867 / T7901).